A 37-amino-acid polypeptide reads, in one-letter code: Diptericin (37 aa).

Residues 1-37 (DLHIPPPDNKINWPQLSGGGGGSPKTGYDININAQQK) are disordered.

This sequence belongs to the attacin/sarcotoxin-2 family. As to expression, synthesized by the fat body and secreted into the hemolymph.

The protein localises to the secreted. Acute phase protein with antibacterial activity against the Gram-negative bacteria E.coli (MIC=6.25 ug/ml) and S.sonnei (MIC=12.5 ug/ml). Lacks antibacterial activity against the Gram-negative bacteria P.vulgaris, P.rettgeri and P.aeruginosa, and against the Gram-positive bacteria B.subtilis, S.aureus, M.luteus, B.megaterium, C.bovis and E.cloacae. The polypeptide is Diptericin (Sarcophaga peregrina (Flesh fly)).